Consider the following 467-residue polypeptide: 6-phosphogluconate dehydrogenase, decarboxylating (467 aa).

NADP(+) is bound by residues 9-14 (GLGVMG), 32-34 (NYT), 73-75 (VTA), and asparagine 101. Substrate contacts are provided by residues asparagine 101 and 127–129 (SGG). Catalysis depends on lysine 181, which acts as the Proton acceptor. Position 184–185 (184–185 (HN)) interacts with substrate. Glutamate 188 acts as the Proton donor in catalysis. The substrate site is built by tyrosine 189, lysine 259, arginine 286, and histidine 451.

It belongs to the 6-phosphogluconate dehydrogenase family. In terms of assembly, homodimer.

The catalysed reaction is 6-phospho-D-gluconate + NADP(+) = D-ribulose 5-phosphate + CO2 + NADPH. It participates in carbohydrate degradation; pentose phosphate pathway; D-ribulose 5-phosphate from D-glucose 6-phosphate (oxidative stage): step 3/3. In terms of biological role, catalyzes the oxidative decarboxylation of 6-phosphogluconate to ribulose 5-phosphate and CO(2), with concomitant reduction of NADP to NADPH. The polypeptide is 6-phosphogluconate dehydrogenase, decarboxylating (gntZ) (Bacillus licheniformis).